Consider the following 939-residue polypeptide: Nonsense-mediated mRNA decay factor SMG8 (939 aa).

Disordered stretches follow at residues 561 to 600 (KICT…QLSP) and 617 to 645 (LNES…ADTE). The span at 567–587 (GEDENEDGETEEADEDTEEKE) shows a compositional bias: acidic residues. Positions 617-629 (LNESQESSEQLSG) are enriched in low complexity.

The protein belongs to the SMG8 family.

In terms of biological role, involved in nonsense-mediated decay (NMD) of mRNAs containing premature stop codons. Probable component of kinase complex containing nonC and recruited to stalled ribosomes. The sequence is that of Nonsense-mediated mRNA decay factor SMG8 from Drosophila ananassae (Fruit fly).